A 31-amino-acid polypeptide reads, in one-letter code: Cytochrome b6-f complex subunit 6 (31 aa).

A helical membrane pass occupies residues 3–23 (ILISYFCFLLIFFLFTLILFF).

It belongs to the PetL family. The 4 large subunits of the cytochrome b6-f complex are cytochrome b6, subunit IV (17 kDa polypeptide, PetD), cytochrome f and the Rieske protein, while the 4 small subunits are PetG, PetL, PetM and PetN. The complex functions as a dimer.

The protein localises to the plastid. Its subcellular location is the chloroplast thylakoid membrane. In terms of biological role, component of the cytochrome b6-f complex, which mediates electron transfer between photosystem II (PSII) and photosystem I (PSI), cyclic electron flow around PSI, and state transitions. PetL is important for photoautotrophic growth as well as for electron transfer efficiency and stability of the cytochrome b6-f complex. This is Cytochrome b6-f complex subunit 6 from Gnetum parvifolium (Small-leaved jointfir).